We begin with the raw amino-acid sequence, 141 residues long: Nucleoside diphosphate kinase (141 aa).

Residues K11, F59, R87, T93, R104, and N114 each contribute to the ATP site. H117 functions as the Pros-phosphohistidine intermediate in the catalytic mechanism.

This sequence belongs to the NDK family. In terms of assembly, homotetramer. Requires Mg(2+) as cofactor.

It localises to the cytoplasm. The catalysed reaction is a 2'-deoxyribonucleoside 5'-diphosphate + ATP = a 2'-deoxyribonucleoside 5'-triphosphate + ADP. It catalyses the reaction a ribonucleoside 5'-diphosphate + ATP = a ribonucleoside 5'-triphosphate + ADP. Functionally, major role in the synthesis of nucleoside triphosphates other than ATP. The ATP gamma phosphate is transferred to the NDP beta phosphate via a ping-pong mechanism, using a phosphorylated active-site intermediate. This chain is Nucleoside diphosphate kinase, found in Ralstonia pickettii (strain 12J).